We begin with the raw amino-acid sequence, 436 residues long: UPF0229 protein Meso_0256 (436 aa).

The disordered stretch occupies residues 53-110 (PMPARGTSEPTFRPDRSSGERGYILPGNKEFAPGDRLPKPGASGGEGGTGAGRGGSDD). The span at 94–106 (ASGGEGGTGAGRG) shows a compositional bias: gly residues.

The protein belongs to the UPF0229 family.

The chain is UPF0229 protein Meso_0256 from Chelativorans sp. (strain BNC1).